Here is a 538-residue protein sequence, read N- to C-terminus: Acetylcholine receptor subunit alpha-type acr-7 (538 aa).

Positions 1-27 (MMVQSIQIVLPVALFFLIVFNGFTVEG) are cleaved as a signal peptide. Residues 28–250 (SKKEAQLYRD…LHLRRRTFYY (223 aa)) lie on the Extracellular side of the membrane. 2 N-linked (GlcNAc...) asparagine glycosylation sites follow: Asn-41 and Asn-101. 2 disulfide bridges follow: Cys-160/Cys-174 and Cys-229/Cys-230. The next 3 membrane-spanning stretches (helical) occupy residues 251-271 (VFNV…AFCL), 280-300 (IGLQ…LSEM), and 313-333 (VFFS…ILVL). At 334 to 513 (NIRYRQITNH…FAAQAVDRFC (180 aa)) the chain is on the cytoplasmic side. The helical transmembrane segment at 514 to 534 (LIIFTIVFIICCFIFVAIPPI) threads the bilayer.

It belongs to the ligand-gated ion channel (TC 1.A.9) family. Acetylcholine receptor (TC 1.A.9.1) subfamily. As to quaternary structure, forms a homooligomeric channel blocked by alpha-bungarotoxin. The structure is probably pentameric.

It localises to the postsynaptic cell membrane. Its subcellular location is the cell membrane. Functionally, after binding acetylcholine, the AChR responds by an extensive change in conformation that affects all subunits and leads to opening of an ion-conducting channel across the plasma membrane. This Caenorhabditis elegans protein is Acetylcholine receptor subunit alpha-type acr-7 (acr-7).